A 1447-amino-acid chain; its full sequence is ATP-dependent helicase SGS1 (1447 aa).

Disordered stretches follow at residues isoleucine 37–lysine 78, lysine 243–asparagine 264, lysine 342–glutamate 430, lysine 552–serine 572, and threonine 601–aspartate 639. Residues glycine 59–lysine 78 show a composition bias toward polar residues. Basic and acidic residues predominate over residues lysine 243–lysine 253. The segment covering glycine 254 to asparagine 264 has biased composition (polar residues). Residues glutamate 363–proline 386 are compositionally biased toward basic and acidic residues. Composition is skewed to acidic residues over residues glutamate 403 to aspartate 415 and lysine 552 to asparagine 561. Positions threonine 601–histidine 611 are enriched in basic and acidic residues. The Helicase ATP-binding domain maps to valine 687–valine 864. An ATP-binding site is contributed by alanine 714–threonine 721. A DEAH box motif is present at residues aspartate 808–histidine 811. Positions threonine 886–glutamine 1035 constitute a Helicase C-terminal domain. The 80-residue stretch at leucine 1272–glutamate 1351 folds into the HRDC domain. The segment covering glutamine 1402–asparagine 1411 has biased composition (polar residues). Residues glutamine 1402–lysine 1447 are disordered. A compositionally biased stretch (low complexity) spans threonine 1412–lysine 1424. A compositionally biased stretch (basic residues) spans serine 1425–lysine 1447.

Belongs to the helicase family. RecQ subfamily. Heterodimer with TOP3. Forms a complex with TOP3 and RMI1. Forms a ternary complex with a MLH1-MLH3 heterodimer (MutLbeta) during meiosis. Interacts with TOP2. Mg(2+) is required as a cofactor.

Its subcellular location is the nucleus. The protein resides in the nucleolus. The enzyme catalyses Couples ATP hydrolysis with the unwinding of duplex DNA by translocating in the 3'-5' direction.. The catalysed reaction is ATP + H2O = ADP + phosphate + H(+). Helicase activity on G-quadruplex DNA is inhibited by ATP-gamma-S. Functionally, ATP-dependent 3'-5' DNA helicase able to unwind duplex DNA or DNA:RNA heteroduplex. Unwinds G-quadruplex DNA; unwinding occurs in the 3'-5' direction, requires a 3' single-stranded end of at least 7 nucleotides. Helicase activity is higher on G-quadruplex substrates than on duplex DNA substrates. Assayed with a catalytic fragment (residues 400-1268). Telomeres and rDNA are notably G-rich; formation of G-quadruplex DNA would block DNA replication and transcription. Acts as an integral component of the S-phase checkpoint response, which arrests cells due to DNA damage or blocked fork progression during DNA replication. Can create a deleterious topological substrate that TOP3 preferentially resolves. The TOP3-SGS1 protein complex may function as a eukaryotic reverse gyrase introducing positive supercoils into extrachromosomal ribosomal DNA rings. Together with topoisomerase II has a role in chromosomal segregation. Maintains rDNA structure where it has a role in re-starting stalled replication forks. The polypeptide is ATP-dependent helicase SGS1 (Saccharomyces cerevisiae (strain ATCC 204508 / S288c) (Baker's yeast)).